A 568-amino-acid polypeptide reads, in one-letter code: Cytosolic purine 5'-nucleotidase (568 aa).

The active-site Nucleophile is aspartate 52. The IMP site is built by aspartate 52 and aspartate 54. Aspartate 52 and aspartate 54 together coordinate Mg(2+). Aspartate 54 acts as the Proton donor in catalysis. 2 residues coordinate ATP: arginine 144 and asparagine 154. Residues arginine 202, aspartate 206, lysine 215, threonine 249, asparagine 250, serine 251, and lysine 292 each contribute to the IMP site. Aspartate 351 contacts Mg(2+). The ATP site is built by glutamine 453 and arginine 456. The tract at residues 528–568 (ISEIKPPNLFPQKPQEITHCHDEDDDEEEEEEEEEEEEEEE) is disordered. The segment at 548–568 (HDEDDDEEEEEEEEEEEEEEE) is required for tetramer assembly. Residues 550–568 (EDDDEEEEEEEEEEEEEEE) show a composition bias toward acidic residues.

The protein belongs to the 5'(3')-deoxyribonucleotidase family. As to quaternary structure, homotetramer. It depends on Mg(2+) as a cofactor.

Its subcellular location is the cytoplasm. The protein localises to the cytosol. The catalysed reaction is a ribonucleoside 5'-phosphate + H2O = a ribonucleoside + phosphate. The enzyme catalyses a 2'-deoxyribonucleoside + a ribonucleoside 5'-phosphate = a ribonucleoside + a 2'-deoxyribonucleoside 5'-phosphate. It catalyses the reaction IMP + H2O = inosine + phosphate. It carries out the reaction GMP + H2O = guanosine + phosphate. The catalysed reaction is dIMP + H2O = 2'-deoxyinosine + phosphate. The enzyme catalyses dGMP + H2O = 2'-deoxyguanosine + phosphate. It catalyses the reaction XMP + H2O = xanthosine + phosphate. It carries out the reaction inosine + GMP = guanosine + IMP. The catalysed reaction is dGMP + inosine = 2'-deoxyguanosine + IMP. The enzyme catalyses dIMP + inosine = 2'-deoxyinosine + IMP. It catalyses the reaction inosine + UMP = uridine + IMP. It carries out the reaction inosine + CMP = cytidine + IMP. The catalysed reaction is inosine + AMP = IMP + adenosine. With respect to regulation, allosterically activated by various compounds including ATP, 2,3-BPG/2,3-Bisphosphoglyceric acid and Ap4A/P1,P4-bis(5'-adenosyl) tetraphosphate. Binding of an allosteric activator is a prerequisiste to magnesium and substrate binding. Inhibited by inorganic phosphate. Broad specificity cytosolic 5'-nucleotidase that catalyzes the dephosphorylation of 6-hydroxypurine nucleoside 5'-monophosphates. In addition, possesses a phosphotransferase activity by which it can transfer a phosphate from a donor nucleoside monophosphate to an acceptor nucleoside, preferably inosine, deoxyinosine and guanosine. Has the highest activities for IMP and GMP followed by dIMP, dGMP and XMP. Could also catalyze the transfer of phosphates from pyrimidine monophosphates but with lower efficiency. Through these activities regulates the purine nucleoside/nucleotide pools within the cell. The chain is Cytosolic purine 5'-nucleotidase (nt5c2) from Xenopus tropicalis (Western clawed frog).